Consider the following 197-residue polypeptide: Large ribosomal subunit protein bL17 (197 aa).

A disordered region spans residues Arg136 to Lys197. The segment covering Val148–Ala187 has biased composition (acidic residues). The span at Asp188–Lys197 shows a compositional bias: basic and acidic residues.

It belongs to the bacterial ribosomal protein bL17 family. Part of the 50S ribosomal subunit. Contacts protein L32.

This Beutenbergia cavernae (strain ATCC BAA-8 / DSM 12333 / CCUG 43141 / JCM 11478 / NBRC 16432 / NCIMB 13614 / HKI 0122) protein is Large ribosomal subunit protein bL17.